An 894-amino-acid chain; its full sequence is MQEKIELNQEVAKPLAEKHTPMMQQYLRIKADHPDTLLFYRMGDFYELFHDDAEKAARLLDITLTARGSSNGVPIRMAGIPFHSADQYLAKLVKLGESVAICEQIGDPAASKGPVERKVVRIVTPGTLTDASLLPDKSDTFLMAVHQQTTRRGVSKTGLAWLNLASGELRLMECEAAQLAREFERIRPAELLYADGIDLPAVACARTRLPEWHFDQDAGTRRLLEQLGVASLEPFGCAGLGAAIGAAGALLNYAATTQGQSLRHVRDIKVERESEFVGLDSATRRNLELTETLRGGESPTLFSLLDTCATAMGSRALRHWLHHPLRDPALPRARQQAIGVLIDHGIDDLRSALRKLADVERITSRLALLSARPRDLSSLRDTLRALPHVRACLQAEPDSSLLSLTVAELAVPQACLDLLISAVAEEPATVVRDGGVIARGYDAELDELRDISENCGQFLVDLESRERTRTGIANLRVEYNRVHGFYIEVTNGQADKVPDDYRRRQTLKNAERYITPELKAFEDKALSAQDRALAREKQLYDVLLQALLPHIGELQRVAGALARLDVLASLAERAQTLDWSCPERVGDNVIDIVQGRHPVVEGQLAAESVPFIANDCQLNEARKLLLITGPNMGGKSTFMRQTALIVLLACVGAYVPARRAVIGPVDRIFTRIGAADDLAGGRSTFMVEMTEAAAILHHATPASLVLMDEIGRGTSTFDGLALAWAIARHLLSHNRSHTLFATHYFELTQLPQEFPQAANVHLSAVEHGDGIVFLHAVQDGPASQSYGLQVAQLAGVPQPVIRAARKHLAWLEQQSADATPTPQLDLFAPPPHPDTSDDDEPVSIGKPVQVALLPEQAAVLDALSDLDPDSLTPRAALDALYRLKVLAGEVVDAA.

629-636 provides a ligand contact to ATP; the sequence is GPNMGGKS. Positions 819-840 are disordered; sequence TPTPQLDLFAPPPHPDTSDDDE.

This sequence belongs to the DNA mismatch repair MutS family.

In terms of biological role, this protein is involved in the repair of mismatches in DNA. It is possible that it carries out the mismatch recognition step. This protein has a weak ATPase activity. In Cupriavidus pinatubonensis (strain JMP 134 / LMG 1197) (Cupriavidus necator (strain JMP 134)), this protein is DNA mismatch repair protein MutS.